The primary structure comprises 188 residues: Acireductone dioxygenase (188 aa).

The Fe(2+) site is built by H97, H99, E103, and H141. Residues H97, H99, E103, and H141 each contribute to the Ni(2+) site.

Belongs to the acireductone dioxygenase (ARD) family. As to quaternary structure, monomer. Fe(2+) serves as cofactor. The cofactor is Ni(2+).

It catalyses the reaction 1,2-dihydroxy-5-(methylsulfanyl)pent-1-en-3-one + O2 = 3-(methylsulfanyl)propanoate + CO + formate + 2 H(+). It carries out the reaction 1,2-dihydroxy-5-(methylsulfanyl)pent-1-en-3-one + O2 = 4-methylsulfanyl-2-oxobutanoate + formate + 2 H(+). The protein operates within amino-acid biosynthesis; L-methionine biosynthesis via salvage pathway; L-methionine from S-methyl-5-thio-alpha-D-ribose 1-phosphate: step 5/6. Catalyzes 2 different reactions between oxygen and the acireductone 1,2-dihydroxy-3-keto-5-methylthiopentene (DHK-MTPene) depending upon the metal bound in the active site. Fe-containing acireductone dioxygenase (Fe-ARD) produces formate and 2-keto-4-methylthiobutyrate (KMTB), the alpha-ketoacid precursor of methionine in the methionine recycle pathway. Ni-containing acireductone dioxygenase (Ni-ARD) produces methylthiopropionate, carbon monoxide and formate, and does not lie on the methionine recycle pathway. The polypeptide is Acireductone dioxygenase (Xanthomonas oryzae pv. oryzae (strain MAFF 311018)).